The primary structure comprises 132 residues: Small ribosomal subunit protein uS8 (132 aa).

The protein belongs to the universal ribosomal protein uS8 family. As to quaternary structure, part of the 30S ribosomal subunit. Contacts proteins S5 and S12.

In terms of biological role, one of the primary rRNA binding proteins, it binds directly to 16S rRNA central domain where it helps coordinate assembly of the platform of the 30S subunit. This chain is Small ribosomal subunit protein uS8, found in Rickettsia felis (strain ATCC VR-1525 / URRWXCal2) (Rickettsia azadi).